Here is a 375-residue protein sequence, read N- to C-terminus: Aminomethyltransferase (375 aa).

Belongs to the GcvT family. In terms of assembly, the glycine cleavage system is composed of four proteins: P, T, L and H.

The catalysed reaction is N(6)-[(R)-S(8)-aminomethyldihydrolipoyl]-L-lysyl-[protein] + (6S)-5,6,7,8-tetrahydrofolate = N(6)-[(R)-dihydrolipoyl]-L-lysyl-[protein] + (6R)-5,10-methylene-5,6,7,8-tetrahydrofolate + NH4(+). Its function is as follows. The glycine cleavage system catalyzes the degradation of glycine. This chain is Aminomethyltransferase, found in Ralstonia pickettii (strain 12J).